The primary structure comprises 332 residues: Methylthioribose-1-phosphate isomerase (332 aa).

Residues 44–46 (RGA), Arg87, and Gln192 each bind substrate. Asp233 functions as the Proton donor in the catalytic mechanism. A substrate-binding site is contributed by 243–244 (NK).

The protein belongs to the eIF-2B alpha/beta/delta subunits family. MtnA subfamily.

It carries out the reaction 5-(methylsulfanyl)-alpha-D-ribose 1-phosphate = 5-(methylsulfanyl)-D-ribulose 1-phosphate. It functions in the pathway amino-acid biosynthesis; L-methionine biosynthesis via salvage pathway; L-methionine from S-methyl-5-thio-alpha-D-ribose 1-phosphate: step 1/6. Its function is as follows. Catalyzes the interconversion of methylthioribose-1-phosphate (MTR-1-P) into methylthioribulose-1-phosphate (MTRu-1-P). This Dehalococcoides mccartyi (strain CBDB1) protein is Methylthioribose-1-phosphate isomerase.